The chain runs to 212 residues: Phosphatidylserine decarboxylase proenzyme (212 aa).

Serine 182 serves as the catalytic Schiff-base intermediate with substrate; via pyruvic acid. Serine 182 carries the pyruvic acid (Ser); by autocatalysis modification.

Belongs to the phosphatidylserine decarboxylase family. PSD-A subfamily. In terms of assembly, heterodimer of a large membrane-associated beta subunit and a small pyruvoyl-containing alpha subunit. Pyruvate serves as cofactor. Is synthesized initially as an inactive proenzyme. Formation of the active enzyme involves a self-maturation process in which the active site pyruvoyl group is generated from an internal serine residue via an autocatalytic post-translational modification. Two non-identical subunits are generated from the proenzyme in this reaction, and the pyruvate is formed at the N-terminus of the alpha chain, which is derived from the carboxyl end of the proenzyme. The post-translation cleavage follows an unusual pathway, termed non-hydrolytic serinolysis, in which the side chain hydroxyl group of the serine supplies its oxygen atom to form the C-terminus of the beta chain, while the remainder of the serine residue undergoes an oxidative deamination to produce ammonia and the pyruvoyl prosthetic group on the alpha chain.

The protein localises to the cell membrane. The catalysed reaction is a 1,2-diacyl-sn-glycero-3-phospho-L-serine + H(+) = a 1,2-diacyl-sn-glycero-3-phosphoethanolamine + CO2. It participates in phospholipid metabolism; phosphatidylethanolamine biosynthesis; phosphatidylethanolamine from CDP-diacylglycerol: step 2/2. In terms of biological role, catalyzes the formation of phosphatidylethanolamine (PtdEtn) from phosphatidylserine (PtdSer). In Paraburkholderia xenovorans (strain LB400), this protein is Phosphatidylserine decarboxylase proenzyme.